The sequence spans 1309 residues: Tetratricopeptide repeat protein 41 (1309 aa).

TPR repeat units follow at residues 399–432 (PQLE…KPCI), 651–684 (WIQE…SVRE), 817–851 (LTFL…SVQS), 859–892 (LKAQ…LLRF), 989–1024 (MSYF…KEKA), and 1042–1079 (SDTL…RAAH).

Its subcellular location is the cytoplasm. The polypeptide is Tetratricopeptide repeat protein 41 (Rattus norvegicus (Rat)).